We begin with the raw amino-acid sequence, 461 residues long: Alcaligin biosynthesis enzyme (461 aa).

9 to 15 (VAIGIGP) is a binding site for FAD.

It belongs to the lysine N(6)-hydroxylase/L-ornithine N(5)-oxygenase family. FAD is required as a cofactor.

It functions in the pathway siderophore biosynthesis; alcaligin biosynthesis. The protein is Alcaligin biosynthesis enzyme (alcA) of Bordetella bronchiseptica (strain ATCC BAA-588 / NCTC 13252 / RB50) (Alcaligenes bronchisepticus).